A 336-amino-acid polypeptide reads, in one-letter code: Small ribosomal subunit protein uS2 (336 aa).

The protein belongs to the universal ribosomal protein uS2 family.

This chain is Small ribosomal subunit protein uS2, found in Beijerinckia indica subsp. indica (strain ATCC 9039 / DSM 1715 / NCIMB 8712).